A 307-amino-acid polypeptide reads, in one-letter code: Elongation factor Ts (307 aa).

The tract at residues 80-83 (TDFV) is involved in Mg(2+) ion dislocation from EF-Tu.

Belongs to the EF-Ts family.

The protein localises to the cytoplasm. Functionally, associates with the EF-Tu.GDP complex and induces the exchange of GDP to GTP. It remains bound to the aminoacyl-tRNA.EF-Tu.GTP complex up to the GTP hydrolysis stage on the ribosome. This Rhodospirillum centenum (strain ATCC 51521 / SW) protein is Elongation factor Ts.